Consider the following 1060-residue polypeptide: Probable serine/threonine-protein kinase MARK-A (1060 aa).

Basic and acidic residues-rich tracts occupy residues 1–11 and 23–37; these read METLKEEEQFR and HLKEETQIQQKEREQ. Disordered regions lie at residues 1–52 and 67–88; these read METL…LQLQ and NKIPSSNNSSNSSSPNPLSISV. 2 stretches are compositionally biased toward low complexity: residues 38–52 and 68–88; these read QQQQQQQLQQQLQLQ and KIPSSNNSSNSSSPNPLSISV. The Protein kinase domain occupies 109-361; the sequence is YLVIKTIGRG…MEEIINHPWL (253 aa). Residues 115-123 and lysine 139 each bind ATP; that span reads IGRGQFGKV. Aspartate 232 (proton acceptor) is an active-site residue. The span at 409 to 475 shows a compositional bias: low complexity; sequence INNINNTMAT…TTTTNATTTT (67 aa). Disordered stretches follow at residues 409–488, 560–701, 714–886, and 899–966; these read INNI…NNEE, GENS…SPLC, LREK…PVHS, and DDKS…QEPR. The UBA domain maps to 488–528; it reads ELDQEIIEELVGLGFEREELCNSIRQNKYNDAASTYFLLQG. Over residues 577–594 the composition is skewed to polar residues; that stretch reads TVDSPKSTNTPQYRSSNT. 4 stretches are compositionally biased toward low complexity: residues 603 to 613, 620 to 637, 650 to 699, and 720 to 760; these read QQQQQQQQQQQ, QQQNQQQSQQQYNNNNHN, STTV…NPSP, and TTTN…TSPN. The span at 761–770 shows a compositional bias: polar residues; that stretch reads LQPFSLASTA. Low complexity-rich tracts occupy residues 771-799 and 811-831; these read NNNNNNNNSNNNSNNNNNNNNNNNNSLNS and QQQQQMQQASNTRRLRSNSSS. Over residues 837–846 the composition is skewed to basic and acidic residues; that stretch reads QRQESRKLED. Composition is skewed to low complexity over residues 904–926 and 935–965; these read NSSSSNNNTNNNNTTTSVSTNNT and QNSNNNNQQATSSSPNVTSPSSPSQQQQQEP. The KA1 domain occupies 1008 to 1057; that stretch reads IECETEGVRFSIEICRLPRLSVNGLKFKRIGGSSWRYKSICKDLLSQMKL.

It belongs to the protein kinase superfamily. CAMK Ser/Thr protein kinase family. SNF1 subfamily.

It catalyses the reaction L-seryl-[protein] + ATP = O-phospho-L-seryl-[protein] + ADP + H(+). The enzyme catalyses L-threonyl-[protein] + ATP = O-phospho-L-threonyl-[protein] + ADP + H(+). The chain is Probable serine/threonine-protein kinase MARK-A (mrkA) from Dictyostelium discoideum (Social amoeba).